A 301-amino-acid polypeptide reads, in one-letter code: Pyridoxal 5'-phosphate synthase subunit PdxS (301 aa).

Residue aspartate 31 coordinates D-ribose 5-phosphate. Lysine 88 (schiff-base intermediate with D-ribose 5-phosphate) is an active-site residue. Glycine 160 is a binding site for D-ribose 5-phosphate. Lysine 172 is a D-glyceraldehyde 3-phosphate binding site. D-ribose 5-phosphate contacts are provided by residues glycine 221 and 242–243; that span reads GS.

This sequence belongs to the PdxS/SNZ family. In terms of assembly, in the presence of PdxT, forms a dodecamer of heterodimers.

The catalysed reaction is aldehydo-D-ribose 5-phosphate + D-glyceraldehyde 3-phosphate + L-glutamine = pyridoxal 5'-phosphate + L-glutamate + phosphate + 3 H2O + H(+). It functions in the pathway cofactor biosynthesis; pyridoxal 5'-phosphate biosynthesis. Functionally, catalyzes the formation of pyridoxal 5'-phosphate from ribose 5-phosphate (RBP), glyceraldehyde 3-phosphate (G3P) and ammonia. The ammonia is provided by the PdxT subunit. Can also use ribulose 5-phosphate and dihydroxyacetone phosphate as substrates, resulting from enzyme-catalyzed isomerization of RBP and G3P, respectively. In Methanosarcina mazei (strain ATCC BAA-159 / DSM 3647 / Goe1 / Go1 / JCM 11833 / OCM 88) (Methanosarcina frisia), this protein is Pyridoxal 5'-phosphate synthase subunit PdxS.